Reading from the N-terminus, the 186-residue chain is Peptidyl-tRNA hydrolase (186 aa).

Tyr-16 provides a ligand contact to tRNA. The active-site Proton acceptor is His-21. Positions 66, 68, and 114 each coordinate tRNA.

This sequence belongs to the PTH family. As to quaternary structure, monomer.

Its subcellular location is the cytoplasm. It carries out the reaction an N-acyl-L-alpha-aminoacyl-tRNA + H2O = an N-acyl-L-amino acid + a tRNA + H(+). In terms of biological role, hydrolyzes ribosome-free peptidyl-tRNAs (with 1 or more amino acids incorporated), which drop off the ribosome during protein synthesis, or as a result of ribosome stalling. Its function is as follows. Catalyzes the release of premature peptidyl moieties from peptidyl-tRNA molecules trapped in stalled 50S ribosomal subunits, and thus maintains levels of free tRNAs and 50S ribosomes. This chain is Peptidyl-tRNA hydrolase, found in Ureaplasma urealyticum serovar 10 (strain ATCC 33699 / Western).